Consider the following 202-residue polypeptide: UPF0637 protein Exig_2520 (202 aa).

This sequence belongs to the UPF0637 family.

The chain is UPF0637 protein Exig_2520 from Exiguobacterium sibiricum (strain DSM 17290 / CCUG 55495 / CIP 109462 / JCM 13490 / 255-15).